The chain runs to 292 residues: 2-(5''-triphosphoribosyl)-3'-dephosphocoenzyme-A synthase (292 aa).

The protein belongs to the CitG/MdcB family.

The catalysed reaction is 3'-dephospho-CoA + ATP = 2'-(5''-triphospho-alpha-D-ribosyl)-3'-dephospho-CoA + adenine. Catalyzes the formation of 2-(5''-triphosphoribosyl)-3'-dephosphocoenzyme-A, the precursor of the prosthetic group of the holo-acyl carrier protein (gamma chain) of citrate lyase, from ATP and dephospho-CoA. The sequence is that of 2-(5''-triphosphoribosyl)-3'-dephosphocoenzyme-A synthase from Escherichia coli O17:K52:H18 (strain UMN026 / ExPEC).